Consider the following 359-residue polypeptide: Molybdenum import ATP-binding protein ModC (359 aa).

One can recognise an ABC transporter domain in the interval Met1–Val233. Gly32–Thr39 serves as a coordination point for ATP. The 67-residue stretch at Ala289 to Ala355 folds into the Mop domain.

The protein belongs to the ABC transporter superfamily. Molybdate importer (TC 3.A.1.8) family. In terms of assembly, the complex is composed of two ATP-binding proteins (ModC), two transmembrane proteins (ModB) and a solute-binding protein (ModA).

It is found in the cell inner membrane. The enzyme catalyses molybdate(out) + ATP + H2O = molybdate(in) + ADP + phosphate + H(+). In terms of biological role, part of the ABC transporter complex ModABC involved in molybdenum import. Responsible for energy coupling to the transport system. The protein is Molybdenum import ATP-binding protein ModC of Brucella melitensis biotype 1 (strain ATCC 23456 / CCUG 17765 / NCTC 10094 / 16M).